Here is a 311-residue protein sequence, read N- to C-terminus: Probable cysteine synthase (311 aa).

N6-(pyridoxal phosphate)lysine is present on Lys45. Pyridoxal 5'-phosphate contacts are provided by residues Asn75, 182–186, and Ser270; that span reads GTGGT.

This sequence belongs to the cysteine synthase/cystathionine beta-synthase family. Pyridoxal 5'-phosphate serves as cofactor.

The enzyme catalyses O-acetyl-L-serine + hydrogen sulfide = L-cysteine + acetate. The protein operates within amino-acid biosynthesis; L-cysteine biosynthesis; L-cysteine from L-serine: step 2/2. This chain is Probable cysteine synthase (ytkP), found in Bacillus subtilis (strain 168).